The sequence spans 321 residues: ATP-dependent 6-phosphofructokinase (321 aa).

G12 serves as a coordination point for ATP. 22–26 (RGVVR) lines the ADP pocket. Residues 73–74 (RF) and 103–106 (GDGS) each bind ATP. D104 provides a ligand contact to Mg(2+). 127–129 (TID) lines the substrate pocket. The Proton acceptor role is filled by D129. R156 is an ADP binding site. Residues R164 and 171 to 173 (MGR) each bind substrate. Residues 187 to 189 (GCE), K213, and 215 to 217 (KRH) contribute to the ADP site. Substrate-binding positions include E224, R245, and 251–254 (HTQR).

It belongs to the phosphofructokinase type A (PFKA) family. ATP-dependent PFK group I subfamily. Prokaryotic clade 'B1' sub-subfamily. As to quaternary structure, homotetramer. Mg(2+) is required as a cofactor.

It is found in the cytoplasm. It carries out the reaction beta-D-fructose 6-phosphate + ATP = beta-D-fructose 1,6-bisphosphate + ADP + H(+). It functions in the pathway carbohydrate degradation; glycolysis; D-glyceraldehyde 3-phosphate and glycerone phosphate from D-glucose: step 3/4. Allosterically activated by ADP and other diphosphonucleosides, and allosterically inhibited by phosphoenolpyruvate. Catalyzes the phosphorylation of D-fructose 6-phosphate to fructose 1,6-bisphosphate by ATP, the first committing step of glycolysis. This chain is ATP-dependent 6-phosphofructokinase, found in Glaesserella parasuis serovar 5 (strain SH0165) (Haemophilus parasuis).